The following is a 365-amino-acid chain: tRNA 2-selenouridine synthase (365 aa).

The 124-residue stretch at 15-138 folds into the Rhodanese domain; sequence FIAGQPLIDL…MRQYLIGVIE (124 aa). C98 functions as the S-selanylcysteine intermediate in the catalytic mechanism.

This sequence belongs to the SelU family. In terms of assembly, monomer.

The enzyme catalyses 5-methylaminomethyl-2-thiouridine(34) in tRNA + selenophosphate + (2E)-geranyl diphosphate + H2O + H(+) = 5-methylaminomethyl-2-selenouridine(34) in tRNA + (2E)-thiogeraniol + phosphate + diphosphate. It carries out the reaction 5-methylaminomethyl-2-thiouridine(34) in tRNA + (2E)-geranyl diphosphate = 5-methylaminomethyl-S-(2E)-geranyl-thiouridine(34) in tRNA + diphosphate. It catalyses the reaction 5-methylaminomethyl-S-(2E)-geranyl-thiouridine(34) in tRNA + selenophosphate + H(+) = 5-methylaminomethyl-2-(Se-phospho)selenouridine(34) in tRNA + (2E)-thiogeraniol. The catalysed reaction is 5-methylaminomethyl-2-(Se-phospho)selenouridine(34) in tRNA + H2O = 5-methylaminomethyl-2-selenouridine(34) in tRNA + phosphate. Its function is as follows. Involved in the post-transcriptional modification of the uridine at the wobble position (U34) of tRNA(Lys), tRNA(Glu) and tRNA(Gln). Catalyzes the conversion of 2-thiouridine (S2U-RNA) to 2-selenouridine (Se2U-RNA). Acts in a two-step process involving geranylation of 2-thiouridine (S2U) to S-geranyl-2-thiouridine (geS2U) and subsequent selenation of the latter derivative to 2-selenouridine (Se2U) in the tRNA chain. The protein is tRNA 2-selenouridine synthase of Shewanella sp. (strain ANA-3).